The primary structure comprises 258 residues: 5'-nucleotidase SurE (258 aa).

A divalent metal cation is bound by residues Asp-9, Asp-10, Ser-42, and Asn-96.

The protein belongs to the SurE nucleotidase family. Requires a divalent metal cation as cofactor.

It localises to the cytoplasm. The catalysed reaction is a ribonucleoside 5'-phosphate + H2O = a ribonucleoside + phosphate. Its function is as follows. Nucleotidase that shows phosphatase activity on nucleoside 5'-monophosphates. This chain is 5'-nucleotidase SurE, found in Campylobacter jejuni subsp. jejuni serotype O:6 (strain 81116 / NCTC 11828).